Reading from the N-terminus, the 197-residue chain is Cytochrome c-L (197 aa).

The first 25 residues, 1 to 25 (MMNRVKIGTALLGLTLAGIALPALA), serve as a signal peptide directing secretion. Residues Cys90, Cys93, and His94 each coordinate heme c.

In terms of processing, binds 1 heme c group covalently per subunit.

The protein resides in the periplasm. Its function is as follows. Electron acceptor for MDH. Acts in methanol oxidation. The sequence is that of Cytochrome c-L (moxG) from Methylorubrum extorquens (strain ATCC 14718 / DSM 1338 / JCM 2805 / NCIMB 9133 / AM1) (Methylobacterium extorquens).